Here is a 360-residue protein sequence, read N- to C-terminus: Phospho-N-acetylmuramoyl-pentapeptide-transferase (360 aa).

Helical transmembrane passes span 21–41, 73–93, 94–114, 132–152, 168–188, 199–219, 239–259, 263–283, 288–308, and 338–358; these read YITV…LWIG, TMGG…WANL, ANPY…IGFV, WKYF…YWLG, IMPQ…VGTG, GLAI…AWAT, VVVF…FNTY, VFMG…VAIL, FLLV…ILQV, and VIIR…VTLK.

The protein belongs to the glycosyltransferase 4 family. MraY subfamily. Requires Mg(2+) as cofactor.

It localises to the cell inner membrane. The catalysed reaction is UDP-N-acetyl-alpha-D-muramoyl-L-alanyl-gamma-D-glutamyl-meso-2,6-diaminopimeloyl-D-alanyl-D-alanine + di-trans,octa-cis-undecaprenyl phosphate = di-trans,octa-cis-undecaprenyl diphospho-N-acetyl-alpha-D-muramoyl-L-alanyl-D-glutamyl-meso-2,6-diaminopimeloyl-D-alanyl-D-alanine + UMP. It participates in cell wall biogenesis; peptidoglycan biosynthesis. Catalyzes the initial step of the lipid cycle reactions in the biosynthesis of the cell wall peptidoglycan: transfers peptidoglycan precursor phospho-MurNAc-pentapeptide from UDP-MurNAc-pentapeptide onto the lipid carrier undecaprenyl phosphate, yielding undecaprenyl-pyrophosphoryl-MurNAc-pentapeptide, known as lipid I. This is Phospho-N-acetylmuramoyl-pentapeptide-transferase from Haemophilus influenzae (strain PittEE).